The primary structure comprises 688 residues: Methionine--tRNA ligase (688 aa).

Positions 13-23 match the 'HIGH' region motif; that stretch reads PYANGNFHIGH. Zn(2+)-binding residues include Cys144, Cys147, Cys157, and Cys160. Positions 342 to 346 match the 'KMSKS' region motif; that stretch reads KMSKS. Residue Lys345 participates in ATP binding. The region spanning 582–688 is the tRNA-binding domain; it reads DFAKVDLRIA…PGAQPGMRIH (107 aa).

Belongs to the class-I aminoacyl-tRNA synthetase family. MetG type 1 subfamily. Homodimer. It depends on Zn(2+) as a cofactor.

It localises to the cytoplasm. It catalyses the reaction tRNA(Met) + L-methionine + ATP = L-methionyl-tRNA(Met) + AMP + diphosphate. Functionally, is required not only for elongation of protein synthesis but also for the initiation of all mRNA translation through initiator tRNA(fMet) aminoacylation. The polypeptide is Methionine--tRNA ligase (Acidovorax sp. (strain JS42)).